The sequence spans 399 residues: Putative cytochrome P450 133B2 (399 aa).

Cys348 provides a ligand contact to heme.

Belongs to the cytochrome P450 family. Heme is required as a cofactor.

The protein is Putative cytochrome P450 133B2 (cyp133B2) of Xylella fastidiosa (strain Temecula1 / ATCC 700964).